The following is a 201-amino-acid chain: Small ribosomal subunit protein uS4c (201 aa).

The 61-residue stretch at 89-149 (MRLDNILFRL…DEQKSRALIQ (61 aa)) folds into the S4 RNA-binding domain.

Belongs to the universal ribosomal protein uS4 family. Part of the 30S ribosomal subunit. Contacts protein S5. The interaction surface between S4 and S5 is involved in control of translational fidelity.

Its subcellular location is the plastid. It localises to the chloroplast. In terms of biological role, one of the primary rRNA binding proteins, it binds directly to 16S rRNA where it nucleates assembly of the body of the 30S subunit. Its function is as follows. With S5 and S12 plays an important role in translational accuracy. The sequence is that of Small ribosomal subunit protein uS4c (rps4) from Coffea arabica (Arabian coffee).